Reading from the N-terminus, the 427-residue chain is Probable WRKY transcription factor 35 (427 aa).

2 disordered regions span residues 1 to 45 and 266 to 336; these read MDNF…DLHV and YTSE…HPPF. Residues 23–40 are compositionally biased toward pro residues; that stretch reads SPGPPEGPSPSSMSPPPT. Positions 209 to 275 form a DNA-binding region, WRKY; it reads SGEVVPSDLW…YTSEHNHPWP (67 aa). The segment covering 284-310 has biased composition (low complexity); the sequence is STRSSSSSSLNPSSKSSTAAATTSPSS. The segment covering 311–333 has biased composition (polar residues); that stretch reads RVFQNNSSKDEPNNSNLPSSSTH.

The protein belongs to the WRKY group II-e family.

It is found in the nucleus. Functionally, transcription factor. Interacts specifically with the W box (5'-(T)TGAC[CT]-3'), a frequently occurring elicitor-responsive cis-acting element. The chain is Probable WRKY transcription factor 35 (WRKY35) from Arabidopsis thaliana (Mouse-ear cress).